An 858-amino-acid chain; its full sequence is Leucine--tRNA ligase (858 aa).

A 'HIGH' region motif is present at residues 42–52; it reads PYPSGRLHMGH. The 'KMSKS' region motif lies at 618–622; the sequence is KMSKS. Lys621 lines the ATP pocket.

Belongs to the class-I aminoacyl-tRNA synthetase family.

It localises to the cytoplasm. The catalysed reaction is tRNA(Leu) + L-leucine + ATP = L-leucyl-tRNA(Leu) + AMP + diphosphate. This is Leucine--tRNA ligase from Aliivibrio salmonicida (strain LFI1238) (Vibrio salmonicida (strain LFI1238)).